The following is a 150-amino-acid chain: Globin-2 (150 aa).

Residues 11 to 150 (PLSDAEKNKI…MICILLSSAY (140 aa)) form the Globin domain. Residues histidine 74 and histidine 106 each coordinate heme b.

The protein belongs to the globin family. As to quaternary structure, monomer.

In Mordacia mordax (Southern hemisphere lamprey), this protein is Globin-2.